The primary structure comprises 105 residues: Large ribosomal subunit protein uL24 (105 aa).

The protein belongs to the universal ribosomal protein uL24 family. As to quaternary structure, part of the 50S ribosomal subunit.

Functionally, one of two assembly initiator proteins, it binds directly to the 5'-end of the 23S rRNA, where it nucleates assembly of the 50S subunit. One of the proteins that surrounds the polypeptide exit tunnel on the outside of the subunit. The protein is Large ribosomal subunit protein uL24 of Xanthobacter autotrophicus (strain ATCC BAA-1158 / Py2).